Reading from the N-terminus, the 481-residue chain is Glutamyl-tRNA(Gln) amidotransferase subunit A (481 aa).

Active-site charge relay system residues include Lys75 and Ser150. Ser174 (acyl-ester intermediate) is an active-site residue.

This sequence belongs to the amidase family. GatA subfamily. As to quaternary structure, heterotrimer of A, B and C subunits.

The enzyme catalyses L-glutamyl-tRNA(Gln) + L-glutamine + ATP + H2O = L-glutaminyl-tRNA(Gln) + L-glutamate + ADP + phosphate + H(+). Allows the formation of correctly charged Gln-tRNA(Gln) through the transamidation of misacylated Glu-tRNA(Gln) in organisms which lack glutaminyl-tRNA synthetase. The reaction takes place in the presence of glutamine and ATP through an activated gamma-phospho-Glu-tRNA(Gln). The polypeptide is Glutamyl-tRNA(Gln) amidotransferase subunit A (Macrococcus caseolyticus (strain JCSC5402) (Macrococcoides caseolyticum)).